A 343-amino-acid polypeptide reads, in one-letter code: L-threonine 3-dehydrogenase (343 aa).

Cys-38 serves as a coordination point for Zn(2+). Catalysis depends on charge relay system residues Thr-40 and His-43. Zn(2+)-binding residues include His-63, Glu-64, Cys-93, Cys-96, Cys-99, and Cys-107. NAD(+)-binding positions include Ile-175, Asp-195, Arg-200, 262–264 (LGI), and 286–287 (IY).

This sequence belongs to the zinc-containing alcohol dehydrogenase family. In terms of assembly, homotetramer. It depends on Zn(2+) as a cofactor.

Its subcellular location is the cytoplasm. It carries out the reaction L-threonine + NAD(+) = (2S)-2-amino-3-oxobutanoate + NADH + H(+). It functions in the pathway amino-acid degradation; L-threonine degradation via oxydo-reductase pathway; glycine from L-threonine: step 1/2. Functionally, catalyzes the NAD(+)-dependent oxidation of L-threonine to 2-amino-3-ketobutyrate. The sequence is that of L-threonine 3-dehydrogenase from Burkholderia mallei (strain NCTC 10247).